A 253-amino-acid chain; its full sequence is Imidazole glycerol phosphate synthase subunit HisF (253 aa).

Residues Asp11 and Asp130 contribute to the active site.

This sequence belongs to the HisA/HisF family. In terms of assembly, heterodimer of HisH and HisF.

The protein resides in the cytoplasm. The catalysed reaction is 5-[(5-phospho-1-deoxy-D-ribulos-1-ylimino)methylamino]-1-(5-phospho-beta-D-ribosyl)imidazole-4-carboxamide + L-glutamine = D-erythro-1-(imidazol-4-yl)glycerol 3-phosphate + 5-amino-1-(5-phospho-beta-D-ribosyl)imidazole-4-carboxamide + L-glutamate + H(+). It participates in amino-acid biosynthesis; L-histidine biosynthesis; L-histidine from 5-phospho-alpha-D-ribose 1-diphosphate: step 5/9. IGPS catalyzes the conversion of PRFAR and glutamine to IGP, AICAR and glutamate. The HisF subunit catalyzes the cyclization activity that produces IGP and AICAR from PRFAR using the ammonia provided by the HisH subunit. The chain is Imidazole glycerol phosphate synthase subunit HisF from Thermoanaerobacter sp. (strain X514).